The sequence spans 738 residues: Propionyl-CoA carboxylase alpha chain, mitochondrial (738 aa).

Positions 62-509 (KFDKILIANR…TTKYLPEVYP (448 aa)) constitute a Biotin carboxylation domain. ATP is bound by residues Lys177, 209-270 (SREI…PRHI), Glu261, and Asn296. The ATP-grasp domain occupies 181-378 (KKIATAARVS…IVQQMLRVAY (198 aa)). The Mg(2+) site is built by Glu336, Glu349, and Asn351. The Mn(2+) site is built by Glu336, Glu349, and Asn351. Arg353 is a catalytic residue. Residue Phe409 coordinates biotin. Residues 663–738 (KAKVDLSTVV…DEGEVLVELE (76 aa)) form the Biotinyl-binding domain. At Lys704 the chain carries N6-biotinyllysine.

In terms of assembly, the holoenzyme is a dodecamer composed of 6 alpha subunits and 6 beta subunits. Interacts with sir-2.2. It depends on biotin as a cofactor. Mg(2+) is required as a cofactor. Mn(2+) serves as cofactor. The biotin cofactor is covalently attached to the C-terminal biotinyl-binding domain and is required for the catalytic activity.

The protein resides in the mitochondrion matrix. It catalyses the reaction propanoyl-CoA + hydrogencarbonate + ATP = (S)-methylmalonyl-CoA + ADP + phosphate + H(+). The catalysed reaction is butanoyl-CoA + hydrogencarbonate + ATP = (2S)-ethylmalonyl-CoA + ADP + phosphate + H(+). The protein operates within metabolic intermediate metabolism; propanoyl-CoA degradation; succinyl-CoA from propanoyl-CoA: step 1/3. In terms of biological role, this is one of the 2 subunits of the biotin-dependent propionyl-CoA carboxylase (PCC), a mitochondrial enzyme involved in the catabolism of odd chain fatty acids, branched-chain amino acids isoleucine, threonine, methionine, and valine and other metabolites. Propionyl-CoA carboxylase catalyzes the carboxylation of propionyl-CoA/propanoyl-CoA to D-methylmalonyl-CoA/(S)-methylmalonyl-CoA. Within the holoenzyme, the alpha subunit catalyzes the ATP-dependent carboxylation of the biotin carried by the biotin carboxyl carrier (BCC) domain, while the beta subunit then transfers the carboxyl group from carboxylated biotin to propionyl-CoA. Propionyl-CoA carboxylase also significantly acts on butyryl-CoA/butanoyl-CoA, which is converted to ethylmalonyl-CoA/(2S)-ethylmalonyl-CoA. Other alternative minor substrates include (2E)-butenoyl-CoA/crotonoyl-CoA. The polypeptide is Propionyl-CoA carboxylase alpha chain, mitochondrial (pcca-1) (Caenorhabditis briggsae).